Consider the following 279-residue polypeptide: Movement protein (279 aa).

The interval 246 to 279 (SESEELNVESPPAAIGSSSASRSEAFRPQVVNGL) is disordered. Residues 254-268 (ESPPAAIGSSSASRS) are compositionally biased toward low complexity.

Belongs to the cucumovirus movement protein family.

The protein resides in the host cell junction. It localises to the host plasmodesma. Its function is as follows. Transports viral genome to neighboring plant cells directly through plasmosdesmata, without any budding. The movement protein allows efficient cell to cell propagation, by bypassing the host cell wall barrier. Acts by forming a tubular structure at the host plasmodesmata, enlarging it enough to allow free passage of virion capsids. The sequence is that of Movement protein from Cucumber mosaic virus (strain CS) (CMV).